We begin with the raw amino-acid sequence, 662 residues long: 72 kDa type IV collagenase (662 aa).

A signal peptide spans 1-29 (MEARLVWGVLVGPLRVLCVLCCLLGHAIA). A propeptide spans 30–109 (APSPIIKFPG…PRCGNPDVAN (80 aa)) (activation peptide). The short motif at 100–107 (PRCGNPDV) is the Cysteine switch element. Residue C102 participates in Zn(2+) binding. The collagenase-like 1 stretch occupies residues 110-221 (YNFFPRKPKW…LWTLGEGQVV (112 aa)). Ca(2+)-binding residues include D134 and D168. Zn(2+)-binding residues include H178 and D180. Ca(2+) contacts are provided by D185 and G186. H193 is a binding site for Zn(2+). Residues G200, G202, and D204 each coordinate Ca(2+). Position 206 (H206) interacts with Zn(2+). Ca(2+) is bound by residues D208, D209, and E211. The tract at residues 222–396 (RVKYGNADGE…WGFCPDQGYS (175 aa)) is collagen-binding. Fibronectin type-II domains are found at residues 228–276 (ADGE…FCPH), 286–334 (GDGQ…FCPE), and 344–392 (SEGA…FCPD). 6 disulfides stabilise this stretch: C233–C259, C247–C274, C291–C317, C305–C332, C349–C375, and C363–C390. The interval 397–467 (LFLVAAHEFG…GPTPTLGPVT (71 aa)) is collagenase-like 2. Residue H403 participates in Zn(2+) binding. The active site involves E404. 2 residues coordinate Zn(2+): H407 and H413. The segment at 414–662 (SQDPGALMAP…GSIKSDWLGC (249 aa)) is required for inhibitor TIMP2 binding. C471 and C662 are oxidised to a cystine. Hemopexin repeat units follow at residues 474–518 (DIVF…WPEL), 519–565 (PEKI…GLPP), 567–615 (VQQV…WNAI), and 616–662 (PDNL…WLGC). Residues D478, D523, and D571 each contribute to the Ca(2+) site. Residue N575 is glycosylated (N-linked (GlcNAc...) asparagine). Residue D620 participates in Ca(2+) binding. N644 is a glycosylation site (N-linked (GlcNAc...) asparagine).

It belongs to the peptidase M10A family. Interacts (via the C-terminal hemopexin-like domains-containing region) with the integrin alpha-V/beta-3; the interaction promotes vascular invasion in angiogenic vessels and melamoma cells. Interacts (via the C-terminal PEX domain) with TIMP2 (via the C-terminal); the interaction inhibits the degradation activity. Interacts with GSK3B. Requires Ca(2+) as cofactor. The cofactor is Zn(2+). Post-translationally, phosphorylation on multiple sites modulates enzymatic activity. Phosphorylated by PKC in vitro. In terms of processing, the propeptide is processed by MMP14 (MT-MMP1) and MMP16 (MT-MMP3). Autocatalytic cleavage in the C-terminal produces the anti-angiogenic peptide, PEX. This processing appears to be facilitated by binding integrin integrinv/beta3.

It localises to the secreted. The protein localises to the extracellular space. The protein resides in the extracellular matrix. It is found in the membrane. Its subcellular location is the nucleus. It catalyses the reaction Cleavage of gelatin type I and collagen types IV, V, VII, X. Cleaves the collagen-like sequence Pro-Gln-Gly-|-Ile-Ala-Gly-Gln.. In terms of biological role, ubiquitinous metalloproteinase that is involved in diverse functions such as remodeling of the vasculature, angiogenesis, tissue repair, tumor invasion, inflammation, and atherosclerotic plaque rupture. As well as degrading extracellular matrix proteins, can also act on several nonmatrix proteins such as big endothelial 1 and beta-type CGRP promoting vasoconstriction. Also cleaves KISS at a Gly-|-Leu bond. Appears to have a role in myocardial cell death pathways. Contributes to myocardial oxidative stress by regulating the activity of GSK3beta. Cleaves GSK3beta in vitro. Involved in the formation of the fibrovascular tissues. Its function is as follows. PEX, the C-terminal non-catalytic fragment of MMP2, possesses anti-angiogenic and anti-tumor properties and inhibits cell migration and cell adhesion to FGF2 and vitronectin. Ligand for integrin alpha-v/beta3 on the surface of blood vessels. The sequence is that of 72 kDa type IV collagenase (Mmp2) from Rattus norvegicus (Rat).